A 369-amino-acid chain; its full sequence is Peptide chain release factor 2 (369 aa).

N5-methylglutamine is present on Q251.

The protein belongs to the prokaryotic/mitochondrial release factor family. In terms of processing, methylated by PrmC. Methylation increases the termination efficiency of RF2.

It is found in the cytoplasm. Peptide chain release factor 2 directs the termination of translation in response to the peptide chain termination codons UGA and UAA. This chain is Peptide chain release factor 2, found in Campylobacter fetus subsp. fetus (strain 82-40).